Reading from the N-terminus, the 530-residue chain is RNA-binding protein 39 (530 aa).

Positions 1-146 (MADDIDIEAM…PVREPIDNLT (146 aa)) are disordered. Ala2 bears the N-acetylalanine mark. The segment covering 14 to 32 (PYKKDENKLNSANGHEERS) has biased composition (basic and acidic residues). 2 stretches are compositionally biased toward basic residues: residues 33–56 (KKRK…KERK) and 64–95 (KKSK…RGRY). Tyr95 is subject to Phosphotyrosine. Phosphoserine occurs at positions 97 and 100. Residue Lys111 forms a Glycyl lysine isopeptide (Lys-Gly) (interchain with G-Cter in SUMO2) linkage. A Phosphoserine modification is found at Ser117. A Glycyl lysine isopeptide (Lys-Gly) (interchain with G-Cter in SUMO2) cross-link involves residue Lys119. The segment covering 119–130 (KLSRRRSRSKSP) has biased composition (basic residues). Phosphoserine occurs at positions 121 and 136. Positions 131–146 (FRKDKSPVREPIDNLT) are enriched in basic and acidic residues. Thr146 carries the post-translational modification Phosphothreonine. The 78-residue stretch at 153 to 230 (RTVFCMQLAA…VPIIVQASQA (78 aa)) folds into the RRM 1 domain. Lys244 participates in a covalent cross-link: Glycyl lysine isopeptide (Lys-Gly) (interchain with G-Cter in SUMO2). Positions 250-328 (MRLYVGSLHF…RPMKVGHVTE (79 aa)) constitute an RRM 2 domain. Residues 291 to 355 (KGYGFITFSD…RTGIDLGTTG (65 aa)) form an activating domain region. An interaction with JUN region spans residues 291–406 (KGYGFITFSD…IDLQTRLSQQ (116 aa)). Ser334, Ser337, and Ser341 each carry phosphoserine. Residues 355–406 (GRLQLMARLAEGTGLQIPPAAQQALQMSGSLAFGAVAEFSFVIDLQTRLSQQ) form an interaction with ESR1 and ESR2 region. The interaction with NCOA6 stretch occupies residues 406–530 (QTEASALAAA…ATQLLVPSRR (125 aa)). Residues 445 to 508 (EIKDDVIEEC…KMITAAYVPL (64 aa)) form the RRM 3 domain.

The protein belongs to the splicing factor SR family. Interacts with NCOA6 and JUN. Interacts with ESR1 and ESR2, in the presence of estradiol (E2). Interacts with RSRC1 (via Arg/Ser-rich domain). Interacts with SF3B1. Interacts with ZNF106 (via N-terminus).

The protein resides in the nucleus. Its function is as follows. RNA-binding protein that acts as a pre-mRNA splicing factor. Acts by promoting exon inclusion via regulation of exon cassette splicing. Also acts as a transcriptional coactivator for steroid nuclear receptors ESR1/ER-alpha and ESR2/ER-beta, and JUN/AP-1, independently of the pre-mRNA splicing factor activity. This Mus musculus (Mouse) protein is RNA-binding protein 39 (Rbm39).